The sequence spans 259 residues: Sugar fermentation stimulation protein homolog (259 aa).

This sequence belongs to the SfsA family.

This is Sugar fermentation stimulation protein homolog from Prochlorococcus marinus (strain MIT 9303).